The chain runs to 120 residues: Ribosome-binding factor A (120 aa).

Belongs to the RbfA family. Monomer. Binds 30S ribosomal subunits, but not 50S ribosomal subunits or 70S ribosomes.

The protein localises to the cytoplasm. Its function is as follows. One of several proteins that assist in the late maturation steps of the functional core of the 30S ribosomal subunit. Associates with free 30S ribosomal subunits (but not with 30S subunits that are part of 70S ribosomes or polysomes). Required for efficient processing of 16S rRNA. May interact with the 5'-terminal helix region of 16S rRNA. This is Ribosome-binding factor A from Limosilactobacillus fermentum (strain NBRC 3956 / LMG 18251) (Lactobacillus fermentum).